The chain runs to 1035 residues: Ephrin type-A receptor 6 (1035 aa).

The N-terminal stretch at 1 to 22 (MGGCEVREFLLQFGFFLPLLTA) is a signal peptide. Topologically, residues 23-549 (WTGDCSHVSN…MAAEQGQILV (527 aa)) are extracellular. The region spanning 33–211 (QVVLLDTSTV…FYKKCPFTVR (179 aa)) is the Eph LBD domain. Fibronectin type-III domains follow at residues 330–440 (PPSA…TDQD) and 441–536 (APSL…TGDE). Asn342, Asn396, and Asn409 each carry an N-linked (GlcNAc...) asparagine glycan. Residues 550–570 (IATAAVGGFTLLVILTLFFLI) form a helical membrane-spanning segment. At 571-1035 (TGRCQWYIKA…MHIQEKGFHV (465 aa)) the chain is on the cytoplasmic side. A phosphotyrosine; by autocatalysis mark is found at Tyr605 and Tyr611. The region spanning 630 to 943 (IRIERVIGAG…RNPSALHTLV (314 aa)) is the Protein kinase domain. ATP contacts are provided by residues 636-644 (IGAGEFGEV) and Lys662. The active-site Proton acceptor is Asp797. 2 positions are modified to phosphotyrosine; by autocatalysis: Tyr830 and Tyr977. An SAM domain is found at 960–1024 (PLFVTVGDWL…VSSIQTLRLH (65 aa)). The short motif at 1033-1035 (FHV) is the PDZ-binding element.

Belongs to the protein kinase superfamily. Tyr protein kinase family. Ephrin receptor subfamily. Heterotetramer upon binding of the ligand. The heterotetramer is composed of an ephrin dimer and a receptor dimer. Oligomerization is probably required to induce biological responses. Interacts (via SAM domain) with ANKS1A (via SAM domain). As to expression, brain.

The protein localises to the membrane. The catalysed reaction is L-tyrosyl-[protein] + ATP = O-phospho-L-tyrosyl-[protein] + ADP + H(+). Its function is as follows. Receptor tyrosine kinase which binds promiscuously GPI-anchored ephrin-A family ligands residing on adjacent cells, leading to contact-dependent bidirectional signaling into neighboring cells. The signaling pathway downstream of the receptor is referred to as forward signaling while the signaling pathway downstream of the ephrin ligand is referred to as reverse signaling. The sequence is that of Ephrin type-A receptor 6 (Epha6) from Rattus norvegicus (Rat).